Consider the following 130-residue polypeptide: Small ribosomal subunit protein uS8 (130 aa).

It belongs to the universal ribosomal protein uS8 family. Part of the 30S ribosomal subunit. Contacts proteins S5 and S12.

In terms of biological role, one of the primary rRNA binding proteins, it binds directly to 16S rRNA central domain where it helps coordinate assembly of the platform of the 30S subunit. In Tolumonas auensis (strain DSM 9187 / NBRC 110442 / TA 4), this protein is Small ribosomal subunit protein uS8.